We begin with the raw amino-acid sequence, 357 residues long: Acyl-CoA Delta12-desaturase (357 aa).

2 consecutive transmembrane segments (helical) span residues 49-69 (VLWF…IFAS) and 72-92 (IYTT…ITAG). Fe cation-binding residues include His94, His99, His131, His134, and His135. The Histidine box-1 signature appears at 94-99 (HRLWAH). The short motif at 131–135 (HRVHH) is the Histidine box-2 element. The next 2 membrane-spanning stretches (helical) occupy residues 195 to 215 (LVPF…WGET) and 223 to 245 (STMF…AHMW). Residues His243, His272, His275, and His276 each coordinate Fe cation. The Histidine box-3 signature appears at 272–276 (HNFHH).

This sequence belongs to the fatty acid desaturase type 1 family. It depends on Fe(2+) as a cofactor.

It is found in the membrane. The catalysed reaction is (9Z)-octadecenoyl-CoA + 2 Fe(II)-[cytochrome b5] + O2 + 2 H(+) = (9Z,12Z)-octadecadienoyl-CoA + 2 Fe(III)-[cytochrome b5] + 2 H2O. The enzyme catalyses (9Z)-hexadecenoyl-CoA + 2 Fe(II)-[cytochrome b5] + O2 + 2 H(+) = (9Z,12Z)-hexadecadienoyl-CoA + 2 Fe(III)-[cytochrome b5] + 2 H2O. It carries out the reaction hexadecanoyl-CoA + 2 Fe(II)-[cytochrome b5] + O2 + 2 H(+) = (9Z)-hexadecenoyl-CoA + 2 Fe(III)-[cytochrome b5] + 2 H2O. In terms of biological role, catalyzes the formation of a Delta12 double bond, acting on monounsaturated fatty acyl substrates like palmitoleoyl-CoA ((9Z)-hexadecenoyl-CoA) and oleoyl-CoA ((9Z)-octadecenoyl-CoA) with higher desaturation activity on (9Z)-octadecenoyl-CoA than (9Z)-hexadecenoyl-CoA. Requires preexisting cis double bond at the Delta9 position of fatty acyls to be able to insert the Delta12 double bond. Delta12-desaturation of (9Z)-octadecenoyl-CoA in insects produces (9Z,12Z)-octadecadienoyl-CoA (linoleoyl-CoA) which may be used to supply precursors of crucial mediators of immunity and reproduction and other essential functions. Can also catalyze Delta9-desaturation on saturated fatty acyl substrates like palmitoyl-CoA (hexadecanoyl-CoA) but with lower efficiency. This is Acyl-CoA Delta12-desaturase from Acheta domesticus (House cricket).